Consider the following 102-residue polypeptide: Small ribosomal subunit protein uS10 (102 aa).

The protein belongs to the universal ribosomal protein uS10 family. Part of the 30S ribosomal subunit.

Functionally, involved in the binding of tRNA to the ribosomes. This chain is Small ribosomal subunit protein uS10, found in Syntrophotalea carbinolica (strain DSM 2380 / NBRC 103641 / GraBd1) (Pelobacter carbinolicus).